The sequence spans 206 residues: Octanoyltransferase (206 aa).

Residues 30-206 (PETNDEIWLV…EFVTLLNNSI (177 aa)) enclose the BPL/LPL catalytic domain. Residues 69-76 (RGGQVTYH), 137-139 (SLG), and 150-152 (GIA) contribute to the substrate site. Residue Cys-168 is the Acyl-thioester intermediate of the active site.

The protein belongs to the LipB family.

The protein resides in the cytoplasm. The catalysed reaction is octanoyl-[ACP] + L-lysyl-[protein] = N(6)-octanoyl-L-lysyl-[protein] + holo-[ACP] + H(+). It participates in protein modification; protein lipoylation via endogenous pathway; protein N(6)-(lipoyl)lysine from octanoyl-[acyl-carrier-protein]: step 1/2. In terms of biological role, catalyzes the transfer of endogenously produced octanoic acid from octanoyl-acyl-carrier-protein onto the lipoyl domains of lipoate-dependent enzymes. Lipoyl-ACP can also act as a substrate although octanoyl-ACP is likely to be the physiological substrate. The protein is Octanoyltransferase of Francisella tularensis subsp. mediasiatica (strain FSC147).